We begin with the raw amino-acid sequence, 221 residues long: Glutathione peroxidase 6 (221 aa).

The first 19 residues, 1–19 (MFQQFQASCLVLFFLVGFA), serve as a signal peptide directing secretion. U73 is a catalytic residue. U73 is a non-standard amino acid (selenocysteine).

The protein belongs to the glutathione peroxidase family. As to expression, expressed in olfactory epithelium and embryos.

It is found in the secreted. The catalysed reaction is 2 glutathione + H2O2 = glutathione disulfide + 2 H2O. This Homo sapiens (Human) protein is Glutathione peroxidase 6 (GPX6).